The following is a 462-amino-acid chain: tRNA(Ile2) 2-agmatinylcytidine synthetase TiaS (462 aa).

It belongs to the TiaS family.

The protein resides in the cytoplasm. It catalyses the reaction cytidine(34) in tRNA(Ile2) + agmatine + ATP + H2O = 2-agmatinylcytidine(34) in tRNA(Ile2) + AMP + 2 phosphate + 2 H(+). Functionally, ATP-dependent agmatine transferase that catalyzes the formation of 2-agmatinylcytidine (agm2C) at the wobble position (C34) of tRNA(Ile2), converting the codon specificity from AUG to AUA. This chain is tRNA(Ile2) 2-agmatinylcytidine synthetase TiaS, found in Haloquadratum walsbyi (strain DSM 16790 / HBSQ001).